The following is a 959-amino-acid chain: Glutamate receptor 3.4 (959 aa).

Positions 1-35 (MGFLVMIREVSMAKAIRVVLLCVSVLWVVPKECAC) are cleaved as a signal peptide. The Extracellular portion of the chain corresponds to 36–613 (RSNFSRNSSS…SPWSFLKPFT (578 aa)). N-linked (GlcNAc...) asparagine glycosylation is found at Asn-38, Asn-42, Asn-108, Asn-365, Asn-378, Asn-404, Asn-443, Asn-461, and Asn-576. Residues 614–634 (IEMWAVTGGFFLFVGAMVWIL) traverse the membrane as a helical segment. The Cytoplasmic portion of the chain corresponds to 635-643 (EHRFNQEFR). The helical transmembrane segment at 644–664 (GPPRRQLITIFWFSFSTMFFS) threads the bilayer. Residues 665–675 (HRENTVSSLGR) are Cytoplasmic-facing. The chain crosses the membrane as a helical span at residues 676 to 696 (FVLIIWLFVVLIINSSYTASL). Residues 697-857 (TSILTIRQLT…SEDSQLSLKS (161 aa)) are Extracellular-facing. A helical membrane pass occupies residues 858-878 (FWGLFLICGITCFMALTVFFW). Over 879-959 (RVFWQYQRLL…TSQSQHGEIT (81 aa)) the chain is Cytoplasmic. 2 disordered regions span residues 893 to 913 (DEER…SRAP) and 936 to 959 (KSSK…GEIT). Over residues 943 to 959 (STQSAAGTSQSQHGEIT) the composition is skewed to low complexity.

It belongs to the glutamate-gated ion channel (TC 1.A.10.1) family. As to quaternary structure, forms a heteromeric channel with GLR3.2. In terms of tissue distribution, highly expressed in roots and at lower levels in leaves and siliques. Expressed in seedlings, cotyledons, roots (e.g. root hairs, epidermis and cortex cells), stems, leaves (e.g. vascular bundles and hydathodes), and siliques. Expressed in root phloem.

It localises to the cell membrane. Its subcellular location is the plastid. The protein resides in the chloroplast membrane. Glutamate-gated receptor that probably acts as a non-selective cation channel, at least in hypocotyls. Can be triggered by Asn, Ser, Gly and, to a lower extent, Ala, Cys and Glu. May be involved in light-signal transduction and calcium homeostasis via the regulation of calcium influx into cells. Plays an important role in the calcium-based fast transmission of environmental stress. Acts as a negative regulator of lateral root initiation and development. May restrict primordia numbers and position along the root axis by a signaling process originating in the phloem. AtGLR3.4-mediated cytosolic calcium influx may be involved in the regulation of seed germination under salt stress by modulating sodium accumulation through the SOS pathway. The polypeptide is Glutamate receptor 3.4 (Arabidopsis thaliana (Mouse-ear cress)).